Consider the following 60-residue polypeptide: MAQIKITLTKSPIGRIPSQRKTVVALGLGKLNSSVIKEDNPAVRGMITAVSHLVTVEEVK.

The protein belongs to the universal ribosomal protein uL30 family. In terms of assembly, part of the 50S ribosomal subunit.

The polypeptide is Large ribosomal subunit protein uL30 (Streptococcus gordonii (strain Challis / ATCC 35105 / BCRC 15272 / CH1 / DL1 / V288)).